The primary structure comprises 187 residues: Putative manganese efflux pump MntP (187 aa).

The next 6 helical transmembrane spans lie at 3–23 (LSAT…ASIG), 41–61 (LIFG…GLLA), 62–82 (TQFV…FLGG), 106–128 (LLVT…LAFL), 142–162 (ATLI…PLLG), and 167–187 (ILGG…HFAG).

Belongs to the MntP (TC 9.B.29) family.

Its subcellular location is the cell inner membrane. Its function is as follows. Probably functions as a manganese efflux pump. The chain is Putative manganese efflux pump MntP from Cronobacter sakazakii (strain ATCC BAA-894) (Enterobacter sakazakii).